The chain runs to 143 residues: Large ribosomal subunit protein uL11 (143 aa).

Belongs to the universal ribosomal protein uL11 family. As to quaternary structure, part of the ribosomal stalk of the 50S ribosomal subunit. Interacts with L10 and the large rRNA to form the base of the stalk. L10 forms an elongated spine to which L12 dimers bind in a sequential fashion forming a multimeric L10(L12)X complex. Post-translationally, one or more lysine residues are methylated.

Its function is as follows. Forms part of the ribosomal stalk which helps the ribosome interact with GTP-bound translation factors. In Variovorax paradoxus (strain S110), this protein is Large ribosomal subunit protein uL11.